We begin with the raw amino-acid sequence, 412 residues long: Divalent metal cation transporter MntH (412 aa).

Transmembrane regions (helical) follow at residues 19-39 (LALMGPAFIAAIGYIDPGNFA), 46-66 (ASFGYQLLWVVVWANLMAMLI), 94-114 (VWFYWVQAEIIAMATDLAEFI), 122-142 (LILGVSLLQGAVLTGIATFLI), 156-176 (VIGGLLLFVAAAYIVELFFSQ), 196-216 (AVFLAAGVLGATIMPHVIYLH), 241-261 (IAMTIAGFVNLAMMATAAAAF), 290-310 (IFGLSLVAAGLSSTVVGTLAG), 322-342 (IPLWVRRAVTMAPSFIVILMG), 348-368 (ILVMSQVLLSFGIALALVPLL), and 392-412 (AIVVLVVALNIWLLVGTALGL).

Belongs to the NRAMP family.

Its subcellular location is the cell inner membrane. H(+)-stimulated, divalent metal cation uptake system. The sequence is that of Divalent metal cation transporter MntH from Cronobacter sakazakii (strain ATCC BAA-894) (Enterobacter sakazakii).